A 502-amino-acid polypeptide reads, in one-letter code: Histidine--tRNA ligase (502 aa).

This sequence belongs to the class-II aminoacyl-tRNA synthetase family. Homodimer.

It localises to the cytoplasm. The catalysed reaction is tRNA(His) + L-histidine + ATP = L-histidyl-tRNA(His) + AMP + diphosphate + H(+). This is Histidine--tRNA ligase (hisS) from Brucella suis biovar 1 (strain 1330).